Consider the following 290-residue polypeptide: Short chain dehydrogenase andI (290 aa).

The NADP(+) site is built by Ile35, Asn120, Arg154, Tyr186, Lys190, Val219, and Thr221. The Proton acceptor role is filled by Tyr186. Catalysis depends on Lys190, which acts as the Lowers pKa of active site Tyr.

The protein belongs to the short-chain dehydrogenases/reductases (SDR) family.

Its pathway is secondary metabolite biosynthesis; terpenoid biosynthesis. Its function is as follows. Short chain dehydrogenase; part of the gene cluster that mediates the biosynthesis of anditomin, a fungal meroterpenoid. The first step of the pathway is the synthesis of 3,5-dimethylorsellinic acid (DMOA) by the polyketide synthase andM. DMOA is then converted to the phthalide compound 5,7-dihydroxy-4,6-dimethylphthalide (DHDMP) by the cytochrome P450 monooxygenase andK, which is further prenylated by the prenyltransferase andD to yield farnesyl-DHDMP. Further epoxidation by the FAD-dependent monooxygenase andE leads to epoxyfarnesyl-DHDMP. The next step involves the terpene cyclase andB that converts epoxyfarnesyl-DHDMP into preandiloid A through opening of the epoxide ring followed by the cyclization of the farnesyl moiety. Preandiloid A is in turn oxidized at the C-3 hydroxyl group to yield preandiloid B by the dehydrogenase andC. The dioxygenase andA is solely responsible for the dehydrogenation of preandiloid B leading to the enone preandiloid C, as well as for the intriguing structural rearrangement to generate the bicyclo[2.2.2]octane core, transforming preandiloid C into andiconin. FAD-binding monooxygenase andJ then produces andilesin D which is reduced by dehydrogenase andI to yield andilesin A. Action of acetyltransferase andG followed by a spontaneous acetate elimination leads then to andilesin B, which is in turn substrate of the short chain dehydrogenase andH to yield andilesin C. Finally, the dioxygenase andF catalyzes the transformation of andilesin C to anditomin. In Emericella variicolor (Aspergillus stellatus), this protein is Short chain dehydrogenase andI.